Here is a 291-residue protein sequence, read N- to C-terminus: Taste receptor type 2 member 16 (291 aa).

M1 is a topological domain (extracellular). The helical transmembrane segment at I2–I22 threads the bilayer. Residues V23–R41 are Cytoplasmic-facing. A helical transmembrane segment spans residues L42–A62. Over S63–T84 the chain is Extracellular. An N-linked (GlcNAc...) asparagine glycan is attached at N80. The chain crosses the membrane as a helical span at residues W85 to I105. At K106 to L125 the chain is on the cytoplasmic side. The chain crosses the membrane as a helical span at residues F126–I146. The Extracellular portion of the chain corresponds to G147–T182. N163 is a glycosylation site (N-linked (GlcNAc...) asparagine). A helical transmembrane segment spans residues V183–L203. Residues T204 to S228 are Cytoplasmic-facing. The chain crosses the membrane as a helical span at residues L229 to G249. The Extracellular segment spans residues T250 to W257. Residues L258–L278 traverse the membrane as a helical segment. The Cytoplasmic portion of the chain corresponds to S279 to C291.

It belongs to the G-protein coupled receptor T2R family. In terms of assembly, interacts with RTP3 and RTP4.

The protein resides in the cell membrane. In terms of biological role, receptor that may play a role in the perception of bitterness and is gustducin-linked. May play a role in sensing the chemical composition of the gastrointestinal content. The activity of this receptor may stimulate alpha gustducin, mediate PLC-beta-2 activation and lead to the gating of TRPM5. This is Taste receptor type 2 member 16 (TAS2R16) from Pan paniscus (Pygmy chimpanzee).